We begin with the raw amino-acid sequence, 397 residues long: Acetate kinase 2 (397 aa).

Asparagine 10 is a binding site for Mg(2+). Lysine 17 is a binding site for ATP. Position 90 (arginine 90) interacts with substrate. Aspartate 147 acts as the Proton donor/acceptor in catalysis. Residues 207-211 (HLGNG), 281-283 (DCR), and 329-333 (GIGEN) contribute to the ATP site. Glutamate 383 lines the Mg(2+) pocket.

The protein belongs to the acetokinase family. As to quaternary structure, homodimer. Mg(2+) is required as a cofactor. Mn(2+) serves as cofactor.

The protein localises to the cytoplasm. It carries out the reaction acetate + ATP = acetyl phosphate + ADP. It participates in metabolic intermediate biosynthesis; acetyl-CoA biosynthesis; acetyl-CoA from acetate: step 1/2. Its function is as follows. Catalyzes the formation of acetyl phosphate from acetate and ATP. Can also catalyze the reverse reaction. This Photobacterium profundum (strain SS9) protein is Acetate kinase 2.